Reading from the N-terminus, the 724-residue chain is 1,3-beta-galactosyl-N-acetylhexosamine phosphorylase Cphy3030 (724 aa).

The Proton donor role is filled by Asp316.

This sequence belongs to the glycoside hydrolase 112 family.

The catalysed reaction is beta-D-galactosyl-(1-&gt;3)-N-acetyl-D-glucosamine + phosphate = alpha-D-galactose 1-phosphate + N-acetyl-D-glucosamine. Reversibly phosphorolyzes beta-D-galactopyranosyl-(1-&gt;3)-N-acetyl-D-glucosamine to form alpha-D-galactopyranose 1-phosphate and acetyl-D-glucosamine. Active towards galacto-N-biose and lacto-N-biose. Does not phosphorolyze galacto-N-tetraose or lacto-N-tetraose. In the reverse reaction has activity toward N-acetyl-D-glucosamine and N-acetyl-D-galactosamine, but not L-rhamnose, D-glucose or D-galactose. The chain is 1,3-beta-galactosyl-N-acetylhexosamine phosphorylase Cphy3030 from Lachnoclostridium phytofermentans (strain ATCC 700394 / DSM 18823 / ISDg) (Clostridium phytofermentans).